The following is a 422-amino-acid chain: Enolase (422 aa).

Ser41 is a binding site for Mg(2+). (2R)-2-phosphoglycerate is bound at residue Glu163. Residue Glu204 is the Proton donor of the active site. Mg(2+)-binding residues include Asp241, Glu284, and Asp311. The active-site Proton acceptor is the Lys336. 3 residues coordinate (2R)-2-phosphoglycerate: Arg365, Ser366, and Lys387.

Belongs to the enolase family. In terms of assembly, homodimer. Component of the RNA degradosome, a multiprotein complex involved in RNA processing and mRNA degradation. Mg(2+) serves as cofactor.

It is found in the cytoplasm. The protein localises to the secreted. Its subcellular location is the cell surface. The enzyme catalyses (2R)-2-phosphoglycerate = phosphoenolpyruvate + H2O. It functions in the pathway carbohydrate degradation; glycolysis; pyruvate from D-glyceraldehyde 3-phosphate: step 4/5. Its function is as follows. Catalyzes the reversible conversion of 2-phosphoglycerate (2-PG) into phosphoenolpyruvate (PEP). It is essential for the degradation of carbohydrates via glycolysis. In Legionella pneumophila subsp. pneumophila (strain Philadelphia 1 / ATCC 33152 / DSM 7513), this protein is Enolase.